Consider the following 451-residue polypeptide: Sensor histidine kinase CssS (451 aa).

Residues 1–9 are Cytoplasmic-facing; the sequence is MKNKPLAFQ. A helical membrane pass occupies residues 10 to 30; sequence IWVVISGILLAISILLLVLFS. At 31-165 the chain is on the extracellular side; sequence NTLRDFFTNE…RDDLAYTLFK (135 aa). A helical membrane pass occupies residues 166 to 186; that stretch reads QLLFIIAVVILLSWIPAIWLA. One can recognise an HAMP domain in the interval 187–239; it reads KYLSRPLVSFEKHVKRISEQDWDDPVKVDRKDEIGKLGHTIEEMRQKLVQKDE. Residues 187-451 lie on the Cytoplasmic side of the membrane; that stretch reads KYLSRPLVSF…GVTYRIAVPK (265 aa). The region spanning 247–451 is the Histidine kinase domain; the sequence is NISHDLKTPV…GVTYRIAVPK (205 aa). The residue at position 250 (H250) is a Phosphohistidine; by autocatalysis.

Its subcellular location is the cell membrane. It catalyses the reaction ATP + protein L-histidine = ADP + protein N-phospho-L-histidine.. Functionally, member of the two-component regulatory system CssS/CssR required to control the cellular response to secretion stress. Required for the transcription of htrA. Could detect misfolded proteins at the membrane-cell wall interface and then activate CssR by phosphorylation. The protein is Sensor histidine kinase CssS (cssS) of Bacillus subtilis (strain 168).